We begin with the raw amino-acid sequence, 389 residues long: Dual-specificity RNA methyltransferase RlmN (389 aa).

Residue Glu-110 is the Proton acceptor of the active site. The Radical SAM core domain occupies 116-355 (EKDRATLCVS…TIVRKTRGDD (240 aa)). Cys-123 and Cys-360 are joined by a disulfide. Residues Cys-130, Cys-134, and Cys-137 each contribute to the [4Fe-4S] cluster site. S-adenosyl-L-methionine-binding positions include 184-185 (GE), Ser-216, 238-240 (SLH), and Asn-317. Cys-360 acts as the S-methylcysteine intermediate in catalysis.

This sequence belongs to the radical SAM superfamily. RlmN family. The cofactor is [4Fe-4S] cluster.

The protein localises to the cytoplasm. The catalysed reaction is adenosine(2503) in 23S rRNA + 2 reduced [2Fe-2S]-[ferredoxin] + 2 S-adenosyl-L-methionine = 2-methyladenosine(2503) in 23S rRNA + 5'-deoxyadenosine + L-methionine + 2 oxidized [2Fe-2S]-[ferredoxin] + S-adenosyl-L-homocysteine. It catalyses the reaction adenosine(37) in tRNA + 2 reduced [2Fe-2S]-[ferredoxin] + 2 S-adenosyl-L-methionine = 2-methyladenosine(37) in tRNA + 5'-deoxyadenosine + L-methionine + 2 oxidized [2Fe-2S]-[ferredoxin] + S-adenosyl-L-homocysteine. Functionally, specifically methylates position 2 of adenine 2503 in 23S rRNA and position 2 of adenine 37 in tRNAs. m2A2503 modification seems to play a crucial role in the proofreading step occurring at the peptidyl transferase center and thus would serve to optimize ribosomal fidelity. The protein is Dual-specificity RNA methyltransferase RlmN of Erwinia tasmaniensis (strain DSM 17950 / CFBP 7177 / CIP 109463 / NCPPB 4357 / Et1/99).